A 182-amino-acid polypeptide reads, in one-letter code: Putative manganese efflux pump MntP (182 aa).

6 consecutive transmembrane segments (helical) span residues 6–26, 37–57, 71–91, 101–121, 131–151, and 162–182; these read LIPL…VSLG, ILYI…IGMV, HFAG…STIL, IGIS…SVGL, IITI…GLLI, and YGEI…LFPI.

This sequence belongs to the MntP (TC 9.B.29) family.

It localises to the cell membrane. In terms of biological role, probably functions as a manganese efflux pump. The protein is Putative manganese efflux pump MntP of Bacillus cereus (strain G9842).